The sequence spans 257 residues: UPF0246 protein HAPS_0280 (257 aa).

The protein belongs to the UPF0246 family.

The chain is UPF0246 protein HAPS_0280 from Glaesserella parasuis serovar 5 (strain SH0165) (Haemophilus parasuis).